The primary structure comprises 1766 residues: DNA-directed RNA polymerase II subunit RPB1-B (1766 aa).

4 residues coordinate Zn(2+): cysteine 69, cysteine 72, cysteine 79, and histidine 82. The Mg(2+) site is built by aspartate 487, aspartate 489, and aspartate 491. Positions 813–825 (PHEFFFHTMAGRE) are bridging helix. The segment at 1660-1766 (HAMSSAAPPS…EFGDEEEEEQ (107 aa)) is disordered. Residues 1706–1716 (RGDEPSTHRSD) show a composition bias toward basic and acidic residues. Residues 1742–1756 (PTAKTPQQAAPPTAA) show a composition bias toward low complexity.

The protein belongs to the RNA polymerase beta' chain family. As to quaternary structure, component of the RNA polymerase II (Pol II) complex consisting of 12 subunits.

Its subcellular location is the nucleus. The catalysed reaction is RNA(n) + a ribonucleoside 5'-triphosphate = RNA(n+1) + diphosphate. In terms of biological role, DNA-dependent RNA polymerase catalyzes the transcription of DNA into RNA using the four ribonucleoside triphosphates as substrates. Largest and catalytic component of RNA polymerase II which synthesizes mRNA precursors and many functional non-coding RNAs. Forms the polymerase active center together with the second largest subunit. Pol II is the central component of the basal RNA polymerase II transcription machinery. It is composed of mobile elements that move relative to each other. RPB1 is part of the core element with the central large cleft, the clamp element that moves to open and close the cleft and the jaws that are thought to grab the incoming DNA template. At the start of transcription, a single-stranded DNA template strand of the promoter is positioned within the central active site cleft of Pol II. A bridging helix emanates from RPB1 and crosses the cleft near the catalytic site and is thought to promote translocation of Pol II by acting as a ratchet that moves the RNA-DNA hybrid through the active site by switching from straight to bent conformations at each step of nucleotide addition. During transcription elongation, Pol II moves on the template as the transcript elongates. The polypeptide is DNA-directed RNA polymerase II subunit RPB1-B (TRP5.9) (Trypanosoma brucei brucei).